Here is a 138-residue protein sequence, read N- to C-terminus: MVDYFDYKELLKRARSQLPEVVFSDVRFEIPSADSFVEGNRTIIKNFKDIAKFMERDTHEFAKFVMKELGTAGDMEGNRLILQGKFGWRMVNEKIQNYVNEYVLCPECGKPDTKIIKEGRIHFLKCTACGAMKPLKSL.

It belongs to the eIF-2-beta/eIF-5 family. Heterotrimer composed of an alpha, a beta and a gamma chain.

In terms of biological role, eIF-2 functions in the early steps of protein synthesis by forming a ternary complex with GTP and initiator tRNA. The sequence is that of Translation initiation factor 2 subunit beta from Methanococcus vannielii (strain ATCC 35089 / DSM 1224 / JCM 13029 / OCM 148 / SB).